The sequence spans 136 residues: NADH-ubiquinone oxidoreductase chain 2 (136 aa).

Helical transmembrane passes span 12 to 32 (YFLI…NQSF), 34 to 54 (FLIP…MWLV), 74 to 94 (IGPL…WLMV), and 99 to 119 (FLLM…AVIL).

It belongs to the complex I subunit 2 family.

The protein localises to the mitochondrion inner membrane. It catalyses the reaction a ubiquinone + NADH + 5 H(+)(in) = a ubiquinol + NAD(+) + 4 H(+)(out). Its function is as follows. Core subunit of the mitochondrial membrane respiratory chain NADH dehydrogenase (Complex I) that is believed to belong to the minimal assembly required for catalysis. Complex I functions in the transfer of electrons from NADH to the respiratory chain. The immediate electron acceptor for the enzyme is believed to be ubiquinone. This is NADH-ubiquinone oxidoreductase chain 2 (ND2) from Artemia salina (Brine shrimp).